The following is a 105-amino-acid chain: Endogenous retrovirus group K member 16 Rec protein (105 aa).

The interval 1-41 (MNPSEMQRKAPPRRRRHRNRAPSSHKMNKMMMSEEQMKLPS) is disordered. Over residues 10-20 (APPRRRRHRNR) the composition is skewed to basic residues. The Nuclear localization signal signature appears at 13-20 (RRRRHRNR). A Nuclear export signal motif is present at residues 50–59 (WAQLNKLTQL).

As to quaternary structure, forms homodimers, homotrimers, and homotetramers via a C-terminal domain. Associates with XPO1 and with ZNF145.

Its subcellular location is the cytoplasm. The protein localises to the nucleus. It is found in the nucleolus. In terms of biological role, retroviral replication requires the nuclear export and translation of unspliced, singly-spliced and multiply-spliced derivatives of the initial genomic transcript. Rec interacts with a highly structured RNA element (RcRE) present in the viral 3'LTR and recruits the cellular nuclear export machinery. This permits export to the cytoplasm of unspliced genomic or incompletely spliced subgenomic viral transcripts. The protein is Endogenous retrovirus group K member 16 Rec protein (ERVK-16) of Homo sapiens (Human).